The chain runs to 573 residues: Adenine deaminase (573 aa).

It belongs to the metallo-dependent hydrolases superfamily. Adenine deaminase family. It depends on Mn(2+) as a cofactor.

The enzyme catalyses adenine + H2O + H(+) = hypoxanthine + NH4(+). The sequence is that of Adenine deaminase from Bacillus licheniformis (strain ATCC 14580 / DSM 13 / JCM 2505 / CCUG 7422 / NBRC 12200 / NCIMB 9375 / NCTC 10341 / NRRL NRS-1264 / Gibson 46).